Reading from the N-terminus, the 195-residue chain is Alkyl hydroperoxide reductase C (195 aa).

Positions 4–170 constitute a Thioredoxin domain; it reads LTIGDQFPEY…VLRVLDALQS (167 aa). An Isoglutamyl lysine isopeptide (Lys-Gln) (interchain with Q-Cter in protein Pup) cross-link involves residue Lys41. The active-site Cysteine sulfenic acid (-SOH) intermediate is the Cys61.

This sequence belongs to the peroxiredoxin family. AhpC/Prx1 subfamily. As to quaternary structure, homodimer; disulfide-linked, upon oxidation. 6 homodimers assemble to form a ring-like dodecamer. Identified in a complex with AhpD, DlaT and Lpd.

It is found in the cytoplasm. The catalysed reaction is N(6)-[(R)-dihydrolipoyl]-L-lysyl-[lipoyl-carrier protein] + a hydroperoxide = N(6)-[(R)-lipoyl]-L-lysyl-[lipoyl-carrier protein] + an alcohol + H2O. Thiol-specific peroxidase that catalyzes the reduction of hydrogen peroxide and organic hydroperoxides to water and alcohols, respectively. Plays a role in cell protection against oxidative stress by detoxifying peroxides. Together with AhpD, DlaT and Lpd, constitutes an NADH-dependent peroxidase active against hydrogen and alkyl peroxides as well as serving as a peroxynitrite reductase, thus protecting the bacterium against reactive nitrogen intermediates and oxidative stress generated by the host immune system. Does not however seem to play a role in detoxification of isoniazid. This chain is Alkyl hydroperoxide reductase C, found in Mycolicibacterium smegmatis (strain ATCC 700084 / mc(2)155) (Mycobacterium smegmatis).